The primary structure comprises 354 residues: S-adenosylmethionine-dependent nucleotide dehydratase RSAD2 (354 aa).

The Radical SAM core domain maps to 62 to 282 (AMTPTSVNYH…LDRHSSISCL (221 aa)). Cysteine 76, cysteine 80, and cysteine 83 together coordinate [4Fe-4S] cluster.

The protein belongs to the radical SAM superfamily. RSAD2 family. [4Fe-4S] cluster serves as cofactor. Constitutively expressed in spleen, head kidney and trunk kidney. Following viral infection, detected in most organs including liver, gill, intestine, heart, muscle and brain.

The protein localises to the endoplasmic reticulum membrane. Interferon-inducible iron-sulfur (4FE-4S) cluster-binding antiviral protein which plays a major role in the cell antiviral state induced by type I and type II interferon. The polypeptide is S-adenosylmethionine-dependent nucleotide dehydratase RSAD2 (Siniperca chuatsi (Mandarin fish)).